The chain runs to 285 residues: Ribosomal RNA small subunit methyltransferase A (285 aa).

Residues Asn21, Leu23, Gly48, Glu69, Asp94, and Asn127 each coordinate S-adenosyl-L-methionine.

It belongs to the class I-like SAM-binding methyltransferase superfamily. rRNA adenine N(6)-methyltransferase family. RsmA subfamily.

It is found in the cytoplasm. It carries out the reaction adenosine(1518)/adenosine(1519) in 16S rRNA + 4 S-adenosyl-L-methionine = N(6)-dimethyladenosine(1518)/N(6)-dimethyladenosine(1519) in 16S rRNA + 4 S-adenosyl-L-homocysteine + 4 H(+). Its function is as follows. Specifically dimethylates two adjacent adenosines (A1518 and A1519) in the loop of a conserved hairpin near the 3'-end of 16S rRNA in the 30S particle. May play a critical role in biogenesis of 30S subunits. The sequence is that of Ribosomal RNA small subunit methyltransferase A from Koribacter versatilis (strain Ellin345).